The following is a 239-amino-acid chain: 3,4-dihydroxyphthalate decarboxylase (239 aa).

Residue E84 is the Proton donor/acceptor of the active site. A divalent metal cation is bound by residues E84, H103, H105, and H171.

Belongs to the aldolase class II family. Requires a divalent metal cation as cofactor.

The enzyme catalyses 3,4-dihydroxyphthalate + H(+) = 3,4-dihydroxybenzoate + CO2. The protein operates within xenobiotic degradation; phthalate degradation. Functionally, catalyzes the decarboxylation of 3,4-dihydroxyphthalate to protocatechuate (3,4-dihydroxybenzoate) during phthalate metabolism. In Terrabacter sp. (strain DBF63), this protein is 3,4-dihydroxyphthalate decarboxylase.